Consider the following 789-residue polypeptide: Disintegrin and metalloproteinase domain-containing protein 7 (789 aa).

An N-terminal signal peptide occupies residues 1 to 25 (MFPTGIFLMSVLISQMQGRGIVGVE). Residues 26 to 176 (GQELVHPKKL…NYSCEGLNFT (151 aa)) constitute a propeptide that is removed on maturation. N84, N167, and N174 each carry an N-linked (GlcNAc...) asparagine glycan. At 177–668 (KKSTLIDAKI…WGEALNLTSV (492 aa)) the chain is on the extracellular side. In terms of domain architecture, Peptidase M12B spans 199–393 (KFIELFVVAD…QKPACILNNP (195 aa)). 4 cysteine pairs are disulfide-bonded: C310-C388, C350-C372, C352-C357, and C459-C479. Positions 401-487 (YPFCGNKKVD…ECPKDESQAN (87 aa)) constitute a Disintegrin domain. 3 N-linked (GlcNAc...) asparagine glycosylation sites follow: N583, N628, and N664. The helical transmembrane segment at 669–689 (SIMVVVLVMVIIGVGLVILLI) threads the bilayer. Residues 690–789 (RYQKCIKMKQ…DSQSDCTRLG (100 aa)) are Cytoplasmic-facing. The span at 762 to 771 (DPRGIADPKQ) shows a compositional bias: basic and acidic residues. Positions 762–789 (DPRGIADPKQNDNMNLNLDSQSDCTRLG) are disordered. Positions 772 to 789 (NDNMNLNLDSQSDCTRLG) are enriched in polar residues.

As to quaternary structure, interacts with ITM2B in sperm; the interaction increases following capacitation. Interacts with HSPA5 and CANX. Expressed specifically in the caput region of the epididymis (at protein level).

It is found in the membrane. Functionally, required for normal male fertility via maintenance of epithelial cell morphology in the caput epididymis and subsequently correct epididymis lumen structure required for sperm development. Plays a role in sperm motility, flagella morphology and tyrosine phosphorylation during sperm capacitance. Plays a role in normal expression levels of HSPA5, ITM2B and ADAM2 in sperm both prior to and post-capacitation. This is a non catalytic metalloprotease-like protein. The polypeptide is Disintegrin and metalloproteinase domain-containing protein 7 (Rattus norvegicus (Rat)).